Here is a 32-residue protein sequence, read N- to C-terminus: uncharacterized protein (32 aa).

This is an uncharacterized protein from Saccharolobus islandicus (Sulfolobus islandicus).